The primary structure comprises 381 residues: Regulatory protein RapF (381 aa).

Mn(2+)-binding residues include L40, M43, and E45. TPR repeat units lie at residues 101-137 (YYFN…VKDR), 148-181 (SESY…NIRL), 182-215 (LQCH…AEAE), 222-255 (GRTL…FEES), 262-295 (PQAY…SQKA), and 337-370 (EDFA…RQLI).

The protein belongs to the Rap family. As to quaternary structure, monomer. Is monomeric either alone or in complex with PhrF. Interacts specifically with the C-terminal DNA-binding domain of ComA. Interacts with PhrF.

The protein resides in the cytoplasm. Its activity is regulated as follows. Inhibited by PhrF, which prevents RapF-ComA interaction. Interaction with PhrF induces a conformational change in RapF, which is propagated to the ComA binding site and causes the dissociation of ComA from RapF. Functionally, involved in the regulation of genetic competence development. Inhibits the activity of ComA, a transcriptional factor that regulates the development of genetic competence. Acts by binding to ComA, leading to the inhibition of its DNA-binding activity. May also affect transcription independently of ComA. In Bacillus subtilis (strain 168), this protein is Regulatory protein RapF (rapF).